A 338-amino-acid polypeptide reads, in one-letter code: P2Y purinoceptor 14 (338 aa).

At 1–29 (MNNSTTTDPPNQPCSWNTLITKQIIPVLY) the chain is on the extracellular side. 2 N-linked (GlcNAc...) asparagine glycosylation sites follow: N2 and N3. A helical membrane pass occupies residues 30-50 (GMVFITGLLLNGISGWIFFYV). Residues 51–55 (PSSKS) lie on the Cytoplasmic side of the membrane. A helical membrane pass occupies residues 56–76 (FIIYLKNIVVADFLMGLTFPF). Residues 77–96 (KVLGDSGLGPWQVNVFVCRV) are Extracellular-facing. Residues C94 and C172 are joined by a disulfide bond. A helical transmembrane segment spans residues 97 to 117 (SAVIFYVNMYVSIVFFGLISF). Topologically, residues 118 to 139 (DRYYKIVKPLLTSIVQSVNYSK) are cytoplasmic. A helical membrane pass occupies residues 140-160 (LLSVLVWMLMLLLAVPNIILT). Topologically, residues 161–188 (NQGVKEVTKIQCMELKNELGRKWHKASN) are extracellular. A helical transmembrane segment spans residues 189–209 (YIFVSIFWVVFLLLIVFYTAI). The Cytoplasmic portion of the chain corresponds to 210–234 (TRKIFKSHLKSRKNSTSVKRKSSRN). Residues 235–255 (IFSIVLVFVVCFVPYHIARIP) traverse the membrane as a helical segment. The Extracellular segment spans residues 256-278 (YTKSQTEGHYSCRTKETLLYAKE). A helical transmembrane segment spans residues 279-299 (FTLLLSAANVCLDPIIYFFLC). Over 300-338 (QPFREVLNKKLHMSLKVQNDLEVSKTKRENAIHESTDTL) the chain is Cytoplasmic.

The protein belongs to the G-protein coupled receptor 1 family.

The protein resides in the cell membrane. Functionally, receptor for UDP-glucose coupled to G-proteins. This chain is P2Y purinoceptor 14 (P2ry14), found in Mus musculus (Mouse).